The chain runs to 730 residues: Replication restart protein PriA (730 aa).

The region spanning Leu212 to Leu378 is the Helicase ATP-binding domain. Gly225 to Thr232 contacts ATP. The DEAH box motif lies at Asp321 to His324. 8 residues coordinate Zn(2+): Cys437, Cys440, Cys446, Cys449, Cys464, Cys467, Cys477, and Cys480. Residues Thr472–Ile640 enclose the Helicase C-terminal domain.

Belongs to the helicase family. PriA subfamily. As to quaternary structure, component of the replication restart primosome. Zn(2+) serves as cofactor.

It catalyses the reaction Couples ATP hydrolysis with the unwinding of duplex DNA by translocating in the 3'-5' direction.. It carries out the reaction ATP + H2O = ADP + phosphate + H(+). Functionally, initiates the restart of stalled replication forks, which reloads the replicative helicase on sites other than the origin of replication. Recognizes and binds to abandoned replication forks and remodels them to uncover a helicase loading site. Promotes assembly of the primosome at these replication forks. The protein is Replication restart protein PriA of Haemophilus influenzae (strain ATCC 51907 / DSM 11121 / KW20 / Rd).